Reading from the N-terminus, the 180-residue chain is Inner membrane-spanning protein YciB (180 aa).

The next 5 helical transmembrane spans lie at 25-45, 54-74, 76-96, 118-138, and 150-170; these read QNAT…CYFV, IISV…GNSI, IKIK…MSGI, ITLS…NEIV, and FKVF…LPLL.

Belongs to the YciB family.

It localises to the cell inner membrane. Functionally, plays a role in cell envelope biogenesis, maintenance of cell envelope integrity and membrane homeostasis. The chain is Inner membrane-spanning protein YciB from Rickettsia canadensis (strain McKiel).